Reading from the N-terminus, the 521-residue chain is Cytochrome P450 1A1 (521 aa).

Phenylalanine 229 lines the substrate pocket. Cysteine 463 contributes to the heme binding site.

The protein belongs to the cytochrome P450 family. The cofactor is heme.

It localises to the endoplasmic reticulum membrane. The protein resides in the microsome membrane. It catalyses the reaction an organic molecule + reduced [NADPH--hemoprotein reductase] + O2 = an alcohol + oxidized [NADPH--hemoprotein reductase] + H2O + H(+). Cytochromes P450 are a group of heme-thiolate monooxygenases. They oxidize a variety of structurally unrelated compounds, including steroids, fatty acids, and xenobiotics. The protein is Cytochrome P450 1A1 (cyp1a1) of Platichthys flesus (European flounder).